The sequence spans 452 residues: NADH-quinone oxidoreductase subunit H (452 aa).

Transmembrane regions (helical) follow at residues 28–48, 96–116, 136–156, 177–197, 210–230, 264–286, 301–321, 335–355, and 366–386; these read IILI…LMMI, VIYI…FSVI, LPVA…GIVL, VISY…YAGT, IWFA…MIGE, AEYV…GYLA, WWPA…FVWV, KLGW…VAVI, and YVTA…LWAW.

The protein belongs to the complex I subunit 1 family. NDH-1 is composed of 14 different subunits. Subunits NuoA, H, J, K, L, M, N constitute the membrane sector of the complex.

It localises to the cell membrane. The catalysed reaction is a quinone + NADH + 5 H(+)(in) = a quinol + NAD(+) + 4 H(+)(out). Its function is as follows. NDH-1 shuttles electrons from NADH, via FMN and iron-sulfur (Fe-S) centers, to quinones in the respiratory chain. The immediate electron acceptor for the enzyme in this species is believed to be ubiquinone. Couples the redox reaction to proton translocation (for every two electrons transferred, four hydrogen ions are translocated across the cytoplasmic membrane), and thus conserves the redox energy in a proton gradient. This subunit may bind ubiquinone. The sequence is that of NADH-quinone oxidoreductase subunit H from Thermobifida fusca (strain YX).